Reading from the N-terminus, the 580-residue chain is Benzoate--CoA ligase, peroxisomal (580 aa).

Residues 578 to 580 (SRL) carry the Microbody targeting signal motif.

It belongs to the ATP-dependent AMP-binding enzyme family.

It is found in the peroxisome. The enzyme catalyses benzoate + ATP + CoA = benzoyl-CoA + AMP + diphosphate. Benzoate--CoA ligase involved in benzoyloxyglucosinolate biosynthesis in seeds. Glucosinolates are secondary metabolites involved in pathogen and insect defense of cruciferous plants. The protein is Benzoate--CoA ligase, peroxisomal (AAE20) of Arabidopsis thaliana (Mouse-ear cress).